The sequence spans 549 residues: Chaperonin GroEL (549 aa).

Residues 30-33 (TLGP), Lys51, 87-91 (DGTTT), Gly415, 479-481 (NAA), and Asp495 contribute to the ATP site.

This sequence belongs to the chaperonin (HSP60) family. As to quaternary structure, forms a cylinder of 14 subunits composed of two heptameric rings stacked back-to-back. Interacts with the co-chaperonin GroES.

It localises to the cytoplasm. It catalyses the reaction ATP + H2O + a folded polypeptide = ADP + phosphate + an unfolded polypeptide.. Together with its co-chaperonin GroES, plays an essential role in assisting protein folding. The GroEL-GroES system forms a nano-cage that allows encapsulation of the non-native substrate proteins and provides a physical environment optimized to promote and accelerate protein folding. The polypeptide is Chaperonin GroEL (Leptothrix cholodnii (strain ATCC 51168 / LMG 8142 / SP-6) (Leptothrix discophora (strain SP-6))).